A 268-amino-acid polypeptide reads, in one-letter code: Tryptophan synthase alpha chain (268 aa).

Residues E49 and D60 each act as proton acceptor in the active site.

The protein belongs to the TrpA family. In terms of assembly, tetramer of two alpha and two beta chains.

It carries out the reaction (1S,2R)-1-C-(indol-3-yl)glycerol 3-phosphate + L-serine = D-glyceraldehyde 3-phosphate + L-tryptophan + H2O. Its pathway is amino-acid biosynthesis; L-tryptophan biosynthesis; L-tryptophan from chorismate: step 5/5. In terms of biological role, the alpha subunit is responsible for the aldol cleavage of indoleglycerol phosphate to indole and glyceraldehyde 3-phosphate. This Escherichia coli (strain 55989 / EAEC) protein is Tryptophan synthase alpha chain.